The following is a 635-amino-acid chain: Threonine--tRNA ligase (635 aa).

The TGS domain maps to 1-62; it reads MITITLPDGS…EHDAILRIIT (62 aa). The interval 244–535 is catalytic; the sequence is DHRKIGKAQD…LIEHYAGIWP (292 aa). Zn(2+) contacts are provided by C335, H386, and H512.

The protein belongs to the class-II aminoacyl-tRNA synthetase family. In terms of assembly, homodimer. Zn(2+) is required as a cofactor.

The protein localises to the cytoplasm. It carries out the reaction tRNA(Thr) + L-threonine + ATP = L-threonyl-tRNA(Thr) + AMP + diphosphate + H(+). In terms of biological role, catalyzes the attachment of threonine to tRNA(Thr) in a two-step reaction: L-threonine is first activated by ATP to form Thr-AMP and then transferred to the acceptor end of tRNA(Thr). Also edits incorrectly charged L-seryl-tRNA(Thr). The sequence is that of Threonine--tRNA ligase from Xylella fastidiosa (strain M23).